The sequence spans 115 residues: MSKINDINDLVNATFQVKKFFRDTKKKFNLNYEEIYILNHILRSESNEISSKEIAKCSEFKPYYLTKALQKLKDLKLLSKKRSLQDERTVIVYVTDTQKANIQKLISELEEYIKN.

Residues 51-74 constitute a DNA-binding region (H-T-H motif); that stretch reads SKEIAKCSEFKPYYLTKALQKLKD.

This sequence belongs to the SarA family. As to quaternary structure, homodimer.

The protein localises to the cytoplasm. Its function is as follows. Negative regulator of sarA transcription at late exponential and stationary growth phases. It contributes to the modulation of target genes downstream of the sarA regulatory cascade. Also, positively regulates expression of primary transcripts RNAII and RNAIII generated by agr (virulence accessory gene regulator) locus. The sequence is that of HTH-type transcriptional regulator SarR (sarR) from Staphylococcus aureus (strain NCTC 8325 / PS 47).